Here is a 126-residue protein sequence, read N- to C-terminus: Fluoride-specific ion channel FluC (126 aa).

The next 4 helical transmembrane spans lie at 3–23, 39–59, 71–91, and 101–121; these read MILA…LTGV, TVNV…AHVW, VGVL…ALLV, and AYVA…LALI. Glycine 75 and threonine 78 together coordinate Na(+).

The protein belongs to the fluoride channel Fluc/FEX (TC 1.A.43) family.

It is found in the cell inner membrane. The enzyme catalyses fluoride(in) = fluoride(out). Na(+) is not transported, but it plays an essential structural role and its presence is essential for fluoride channel function. In terms of biological role, fluoride-specific ion channel. Important for reducing fluoride concentration in the cell, thus reducing its toxicity. This chain is Fluoride-specific ion channel FluC, found in Rhodospirillum centenum (strain ATCC 51521 / SW).